We begin with the raw amino-acid sequence, 398 residues long: Tryptophan synthase beta chain (398 aa).

Position 87 is an N6-(pyridoxal phosphate)lysine (Lys87).

The protein belongs to the TrpB family. In terms of assembly, tetramer of two alpha and two beta chains. The cofactor is pyridoxal 5'-phosphate.

The catalysed reaction is (1S,2R)-1-C-(indol-3-yl)glycerol 3-phosphate + L-serine = D-glyceraldehyde 3-phosphate + L-tryptophan + H2O. It functions in the pathway amino-acid biosynthesis; L-tryptophan biosynthesis; L-tryptophan from chorismate: step 5/5. The beta subunit is responsible for the synthesis of L-tryptophan from indole and L-serine. This Blochmanniella floridana protein is Tryptophan synthase beta chain.